A 1639-amino-acid polypeptide reads, in one-letter code: Protein GFS12 (1639 aa).

Residues leucine 206 to aspartate 294 form the Protein kinase 1 domain. One can recognise a BEACH domain in the interval leucine 336–arginine 608. The Protein kinase 2 domain maps to isoleucine 715 to phenylalanine 788. 2 WD repeats span residues alanine 1290–serine 1333 and alanine 1336–leucine 1373. The segment covering serine 1377 to asparagine 1398 has biased composition (low complexity). The segment at serine 1377–arginine 1399 is disordered. WD repeat units lie at residues alanine 1465–aspartate 1499, alanine 1511–proline 1549, and arginine 1609–cysteine 1639.

This sequence belongs to the protein kinase superfamily. Tyr protein kinase family. As to quaternary structure, interacts (via protein kinase 2 domain) with BCHC1 (via PH-BEACH domain). As to expression, weakly expressed in the cotyledons of germinating seedlings. Restricted to the vascular tissues of cotyledons. Detected in root tips, apical meristem, young flower buds and receptacles.

In terms of biological role, may act predominantly to suppress BCHC1, which itself is a negative factor in protein storage vacuole (PSV) trafficking regulation and plant effector triggered immunity (ETI). Required for ETI, but not for cell death. The chain is Protein GFS12 from Arabidopsis thaliana (Mouse-ear cress).